We begin with the raw amino-acid sequence, 293 residues long: MASNVTNKMDPHSMNSRVFIGNLNTLVVKKSDVEAIFSKYGKIAGCSVHKGFAFVQYDKEKNARAAVAGEDGRMIASQVVDINLAAEPKVNRGNAGVKRSAAEMYGSSFDLDYGFQRDYYDGMYSFPARVPPPPPIALAVVPSKRQRLSGNTSRRGKSGFNSKSGKRGSSKSGKLKGDDLQAIKQELTQIKQKVDSLLENLEKIEKEQSKQEVEVKNAKSEEEQSSSSMKKDETHVKMESEGGAEDSAEEGDPLDDDVNEDQGDDQLELIKDDEKEAEEGEDDRDSTNGQDDS.

Positions 16–87 (SRVFIGNLNT…QVVDINLAAE (72 aa)) constitute an RRM domain. Disordered stretches follow at residues 137–177 (ALAV…KLKG) and 206–293 (KEQS…QDDS). A coiled-coil region spans residues 177-225 (GDDLQAIKQELTQIKQKVDSLLENLEKIEKEQSKQEVEVKNAKSEEEQS). Composition is skewed to basic and acidic residues over residues 206–222 (KEQS…KSEE) and 229–240 (MKKDETHVKMES). 2 stretches are compositionally biased toward acidic residues: residues 242-267 (GGAE…DDQL) and 275-284 (KEAEEGEDDR).

This sequence belongs to the RRM HNRPC family. RALY subfamily.

The protein localises to the nucleus. In terms of biological role, may play a role in nucleosome assembly by neutralizing basic proteins such as A and B core hnRNPs. The chain is Heterogeneous nuclear ribonucleoprotein C-like 1 (HNRNPCL1) from Homo sapiens (Human).